The sequence spans 310 residues: Phosphoribosylaminoimidazole-succinocarboxamide synthase (310 aa).

The protein belongs to the SAICAR synthetase family.

It carries out the reaction 5-amino-1-(5-phospho-D-ribosyl)imidazole-4-carboxylate + L-aspartate + ATP = (2S)-2-[5-amino-1-(5-phospho-beta-D-ribosyl)imidazole-4-carboxamido]succinate + ADP + phosphate + 2 H(+). Its pathway is purine metabolism; IMP biosynthesis via de novo pathway; 5-amino-1-(5-phospho-D-ribosyl)imidazole-4-carboxamide from 5-amino-1-(5-phospho-D-ribosyl)imidazole-4-carboxylate: step 1/2. The polypeptide is Phosphoribosylaminoimidazole-succinocarboxamide synthase (Stenotrophomonas maltophilia (strain K279a)).